Consider the following 371-residue polypeptide: Glycosyltransferase 8 domain-containing protein 1 (371 aa).

Residues 1 to 7 (MSFRKVN) lie on the Cytoplasmic side of the membrane. A helical; Signal-anchor for type II membrane protein membrane pass occupies residues 8 to 28 (IIILVLAVALFLLVLHHNFLS). Topologically, residues 29–371 (LSSLLRNEVT…RRYTEISNIK (343 aa)) are lumenal. Asn249 and Asn257 each carry an N-linked (GlcNAc...) asparagine glycan.

This sequence belongs to the glycosyltransferase 8 family.

It is found in the membrane. The protein is Glycosyltransferase 8 domain-containing protein 1 (GLT8D1) of Homo sapiens (Human).